A 519-amino-acid chain; its full sequence is ATP synthase subunit alpha 1 (519 aa).

Position 172–179 (172–179 (GDRQTGKT)) interacts with ATP.

This sequence belongs to the ATPase alpha/beta chains family. In terms of assembly, F-type ATPases have 2 components, CF(1) - the catalytic core - and CF(0) - the membrane proton channel. CF(1) has five subunits: alpha(3), beta(3), gamma(1), delta(1), epsilon(1). CF(0) has three main subunits: a(1), b(2) and c(9-12). The alpha and beta chains form an alternating ring which encloses part of the gamma chain. CF(1) is attached to CF(0) by a central stalk formed by the gamma and epsilon chains, while a peripheral stalk is formed by the delta and b chains.

It localises to the cell inner membrane. The enzyme catalyses ATP + H2O + 4 H(+)(in) = ADP + phosphate + 5 H(+)(out). Functionally, produces ATP from ADP in the presence of a proton gradient across the membrane. The alpha chain is a regulatory subunit. The protein is ATP synthase subunit alpha 1 of Psychromonas ingrahamii (strain DSM 17664 / CCUG 51855 / 37).